Reading from the N-terminus, the 132-residue chain is Phosphoribosyl-AMP cyclohydrolase (132 aa).

Asp78 contacts Mg(2+). A Zn(2+)-binding site is contributed by Cys79. Asp80 and Asp82 together coordinate Mg(2+). Positions 96 and 103 each coordinate Zn(2+).

This sequence belongs to the PRA-CH family. Homodimer. Mg(2+) is required as a cofactor. Zn(2+) serves as cofactor.

It localises to the cytoplasm. It carries out the reaction 1-(5-phospho-beta-D-ribosyl)-5'-AMP + H2O = 1-(5-phospho-beta-D-ribosyl)-5-[(5-phospho-beta-D-ribosylamino)methylideneamino]imidazole-4-carboxamide. Its pathway is amino-acid biosynthesis; L-histidine biosynthesis; L-histidine from 5-phospho-alpha-D-ribose 1-diphosphate: step 3/9. Functionally, catalyzes the hydrolysis of the adenine ring of phosphoribosyl-AMP. The polypeptide is Phosphoribosyl-AMP cyclohydrolase (Nitrosococcus oceani (strain ATCC 19707 / BCRC 17464 / JCM 30415 / NCIMB 11848 / C-107)).